Consider the following 343-residue polypeptide: Dihydroorotase (343 aa).

Residues histidine 14 and histidine 16 each coordinate Zn(2+). Residues histidine 16–arginine 18 and asparagine 42 each bind substrate. Residues lysine 99, histidine 136, and histidine 174 each contribute to the Zn(2+) site. The residue at position 99 (lysine 99) is an N6-carboxylysine. Residue histidine 136 coordinates substrate. Leucine 219 lines the substrate pocket. Aspartate 247 contributes to the Zn(2+) binding site. Aspartate 247 is an active-site residue. Residues histidine 251 and alanine 263 each coordinate substrate.

It belongs to the metallo-dependent hydrolases superfamily. DHOase family. Class II DHOase subfamily. As to quaternary structure, homodimer. The cofactor is Zn(2+).

It carries out the reaction (S)-dihydroorotate + H2O = N-carbamoyl-L-aspartate + H(+). It participates in pyrimidine metabolism; UMP biosynthesis via de novo pathway; (S)-dihydroorotate from bicarbonate: step 3/3. In terms of biological role, catalyzes the reversible cyclization of carbamoyl aspartate to dihydroorotate. The sequence is that of Dihydroorotase from Psychromonas ingrahamii (strain DSM 17664 / CCUG 51855 / 37).